A 481-amino-acid chain; its full sequence is Cysteine--tRNA ligase (481 aa).

C29 provides a ligand contact to Zn(2+). A 'HIGH' region motif is present at residues 31–41 (PTVYDYSHLGH). Zn(2+) is bound by residues C210, H235, and E239. The 'KMSKS' region signature appears at 272-276 (KMSKS). K275 serves as a coordination point for ATP.

It belongs to the class-I aminoacyl-tRNA synthetase family. As to quaternary structure, monomer. Zn(2+) serves as cofactor.

The protein resides in the cytoplasm. It catalyses the reaction tRNA(Cys) + L-cysteine + ATP = L-cysteinyl-tRNA(Cys) + AMP + diphosphate. The sequence is that of Cysteine--tRNA ligase from Anaeromyxobacter sp. (strain K).